Consider the following 151-residue polypeptide: MTIWVDADACPNVIKEILYRAAERMQLPLILVANQALRVPPSRFIRTLRVAAGFDVADNEIVRQCETGDLVITADIPLAAEVLERGAAALNPRGERYSEATIRERLTMRDFMDTLRASGVQTGGPNSLSPRDRQHFAAELDKWWLEIQRKK.

The protein belongs to the UPF0178 family.

This Salmonella arizonae (strain ATCC BAA-731 / CDC346-86 / RSK2980) protein is UPF0178 protein YaiI.